A 156-amino-acid chain; its full sequence is Small ribosomal subunit protein uS7 (156 aa).

Belongs to the universal ribosomal protein uS7 family. Part of the 30S ribosomal subunit. Contacts proteins S9 and S11.

Functionally, one of the primary rRNA binding proteins, it binds directly to 16S rRNA where it nucleates assembly of the head domain of the 30S subunit. Is located at the subunit interface close to the decoding center, probably blocks exit of the E-site tRNA. This is Small ribosomal subunit protein uS7 from Glaesserella parasuis serovar 5 (strain SH0165) (Haemophilus parasuis).